The chain runs to 276 residues: tRNA (guanine-N(7)-)-methyltransferase (276 aa).

The disordered stretch occupies residues 1–23 (MRPDPAPLDPTDASPAQARRHQP). 4 residues coordinate S-adenosyl-L-methionine: Glu-103, Glu-128, Asp-155, and Asp-178. The active site involves Asp-178. Residues Lys-182, Asp-214, and 252-255 (TRYE) contribute to the substrate site.

The protein belongs to the class I-like SAM-binding methyltransferase superfamily. TrmB family.

It catalyses the reaction guanosine(46) in tRNA + S-adenosyl-L-methionine = N(7)-methylguanosine(46) in tRNA + S-adenosyl-L-homocysteine. It participates in tRNA modification; N(7)-methylguanine-tRNA biosynthesis. In terms of biological role, catalyzes the formation of N(7)-methylguanine at position 46 (m7G46) in tRNA. The sequence is that of tRNA (guanine-N(7)-)-methyltransferase from Cutibacterium acnes (strain DSM 16379 / KPA171202) (Propionibacterium acnes).